Reading from the N-terminus, the 179-residue chain is Large ribosomal subunit protein uL6 (179 aa).

This sequence belongs to the universal ribosomal protein uL6 family. As to quaternary structure, part of the 50S ribosomal subunit.

In terms of biological role, this protein binds to the 23S rRNA, and is important in its secondary structure. It is located near the subunit interface in the base of the L7/L12 stalk, and near the tRNA binding site of the peptidyltransferase center. This is Large ribosomal subunit protein uL6 from Syntrophus aciditrophicus (strain SB).